The primary structure comprises 104 residues: Vesicle-associated membrane protein 3 (104 aa).

A disordered region spans residues 1–23; it reads MTTNAPAGSSAAAGSSRRLQQTQ. Topologically, residues 1-81 are cytoplasmic; sequence MTTNAPAGSS…KRKYWWKNCK (81 aa). Positions 7-16 are enriched in low complexity; that stretch reads AGSSAAAGSS. Positions 18-78 constitute a v-SNARE coiled-coil homology domain; sequence RLQQTQNQVD…AKLKRKYWWK (61 aa). Glycyl lysine isopeptide (Lys-Gly) (interchain with G-Cter in ubiquitin) cross-links involve residues K70, K72, and K81. The chain crosses the membrane as a helical; Anchor for type IV membrane protein span at residues 82 to 102; the sequence is MWAIGITVVVIIIIIIVVWSI. Residues 103 to 104 lie on the Vesicular side of the membrane; it reads SS.

Belongs to the synaptobrevin family. Interacts with POPDC1 (via the C-terminus cytoplasmic tail). Interacts with BCAP31; involved in VAMP3 export from the endoplasmic reticulum. Interacts with BAIAP3; this interaction is increased in the presence of calcium. Interacts with PICALM. Post-translationally, ubiquitinated by RNF167 at Lys-70, Lys-72 and Lys-81, regulating the recycling endosome pathway.

The protein localises to the early endosome membrane. It is found in the recycling endosome membrane. The protein resides in the synapse. Its subcellular location is the synaptosome. SNARE involved in vesicular transport from the late endosomes to the trans-Golgi network. The polypeptide is Vesicle-associated membrane protein 3 (VAMP3) (Bos taurus (Bovine)).